The sequence spans 172 residues: EPIDERMAL PATTERNING FACTOR-like protein 7 (172 aa).

A signal peptide spans 1–27 (MDHVNPTLFHLKSLSIFTLTLLYISSP). 4 disulfides stabilise this stretch: C128/C159, C132/C138, C135/C161, and C147/C153.

The protein belongs to the plant cysteine rich small secretory peptide family. Epidermal patterning factor subfamily.

Its subcellular location is the secreted. Controls stomatal patterning. The protein is EPIDERMAL PATTERNING FACTOR-like protein 7 of Arabidopsis thaliana (Mouse-ear cress).